We begin with the raw amino-acid sequence, 337 residues long: Phosphate acyltransferase (337 aa).

Belongs to the PlsX family. In terms of assembly, homodimer. Probably interacts with PlsY.

It localises to the cytoplasm. It carries out the reaction a fatty acyl-[ACP] + phosphate = an acyl phosphate + holo-[ACP]. The protein operates within lipid metabolism; phospholipid metabolism. Its function is as follows. Catalyzes the reversible formation of acyl-phosphate (acyl-PO(4)) from acyl-[acyl-carrier-protein] (acyl-ACP). This enzyme utilizes acyl-ACP as fatty acyl donor, but not acyl-CoA. In Moritella marina (Vibrio marinus), this protein is Phosphate acyltransferase.